The sequence spans 423 residues: Kynureninase (423 aa).

Residues Leu-105, Ser-106, Phe-133–Asp-136, Asp-218, His-221, and Tyr-243 each bind pyridoxal 5'-phosphate. At Lys-244 the chain carries N6-(pyridoxal phosphate)lysine. The pyridoxal 5'-phosphate site is built by Trp-273 and Asn-301.

This sequence belongs to the kynureninase family. In terms of assembly, homodimer. It depends on pyridoxal 5'-phosphate as a cofactor.

The catalysed reaction is L-kynurenine + H2O = anthranilate + L-alanine + H(+). The enzyme catalyses 3-hydroxy-L-kynurenine + H2O = 3-hydroxyanthranilate + L-alanine + H(+). It participates in amino-acid degradation; L-kynurenine degradation; L-alanine and anthranilate from L-kynurenine: step 1/1. The protein operates within cofactor biosynthesis; NAD(+) biosynthesis; quinolinate from L-kynurenine: step 2/3. Functionally, catalyzes the cleavage of L-kynurenine (L-Kyn) and L-3-hydroxykynurenine (L-3OHKyn) into anthranilic acid (AA) and 3-hydroxyanthranilic acid (3-OHAA), respectively. The sequence is that of Kynureninase from Xanthomonas euvesicatoria pv. vesicatoria (strain 85-10) (Xanthomonas campestris pv. vesicatoria).